The following is an 81-amino-acid chain: Centromere protein X (81 aa).

Methionine 1 bears the N-acetylmethionine mark.

The protein belongs to the CENP-X/MHF2 family. As to quaternary structure, heterodimer with CENPX, sometimes called MHF; this interaction stabilizes both partners. MHF heterodimers can assemble to form tetrameric structures. MHF also coassemble with CENPT-CENPW heterodimers at centromeres to form the tetrameric CENP-T-W-S-X complex. Forms a discrete complex with FANCM and CENPX, called FANCM-MHF; this interaction, probably mediated by direct binding between CENPS and FANCM, leads to synergistic activation of double-stranded DNA binding and strongly stimulates FANCM-mediated DNA remodeling. Recruited by FANCM to the Fanconi anemia (FA) core complex, which consists of CENPS, CENPX, FANCA, FANCB, FANCC, FANCE, FANCF, FANCG, FANCL, FANCM, FAAP24 and FAAP100. The FA core complex associates with Bloom syndrome (BLM) complex, which consists of at least BLM, DNA topoisomerase 3-alpha (TOP3A), RMI1/BLAP75, RPA1/RPA70 and RPA2/RPA32. The super complex between FA and BLM is called BRAFT.

It is found in the nucleus. Its subcellular location is the chromosome. The protein resides in the centromere. The protein localises to the kinetochore. DNA-binding component of the Fanconi anemia (FA) core complex. Required for the normal activation of the FA pathway, leading to monoubiquitination of the FANCI-FANCD2 complex in response to DNA damage, cellular resistance to DNA cross-linking drugs, and prevention of chromosomal breakage. In complex with CENPS (MHF heterodimer), crucial cofactor for FANCM in both binding and ATP-dependent remodeling of DNA. Stabilizes FANCM. In complex with CENPS and FANCM (but not other FANC proteins), rapidly recruited to blocked forks and promotes gene conversion at blocked replication forks. In complex with CENPS, CENPT and CENPW (CENP-T-W-S-X heterotetramer), involved in the formation of a functional kinetochore outer plate, which is essential for kinetochore-microtubule attachment and faithful mitotic progression. As a component of MHF and CENP-T-W-S-X complexes, binds DNA and bends it to form a nucleosome-like structure. DNA-binding function is fulfilled in the presence of CENPS, with the following preference for DNA substates: Holliday junction &gt; double-stranded &gt; splay arm &gt; single-stranded. Does not bind DNA on its own. The protein is Centromere protein X (CENPX) of Pongo abelii (Sumatran orangutan).